The chain runs to 268 residues: Tryptophan synthase alpha chain (268 aa).

Active-site proton acceptor residues include Glu-40 and Asp-51.

Belongs to the TrpA family. In terms of assembly, tetramer of two alpha and two beta chains.

It catalyses the reaction (1S,2R)-1-C-(indol-3-yl)glycerol 3-phosphate + L-serine = D-glyceraldehyde 3-phosphate + L-tryptophan + H2O. Its pathway is amino-acid biosynthesis; L-tryptophan biosynthesis; L-tryptophan from chorismate: step 5/5. Functionally, the alpha subunit is responsible for the aldol cleavage of indoleglycerol phosphate to indole and glyceraldehyde 3-phosphate. The sequence is that of Tryptophan synthase alpha chain from Geobacillus thermodenitrificans (strain NG80-2).